We begin with the raw amino-acid sequence, 255 residues long: MFIGIVSLFPEMFRAITDYGVTGRAVKKGLLNIQSWSPRDFTHDRHRTVDDRPYGGGPGMLMMVQPLRDAIHAAKAAAGEGAKVIYLSPQGRKLDQAGVSELATNQKLILVCGRYEGVDERVIQTEIDEEWSIGDYVLSGGELPAMTLIDSVARFIPGVLGHEASAIEDSFADGLLDCPHYTRPEVLEGMEVPPVLLSGNHAEIRRWRLKQSLGRTWLRRPELLENLALTEEQARLLAEFKTEHAQQQHKHDGMA.

S-adenosyl-L-methionine is bound by residues glycine 113 and 133-138; that span reads IGDYVL.

The protein belongs to the RNA methyltransferase TrmD family. In terms of assembly, homodimer.

Its subcellular location is the cytoplasm. The enzyme catalyses guanosine(37) in tRNA + S-adenosyl-L-methionine = N(1)-methylguanosine(37) in tRNA + S-adenosyl-L-homocysteine + H(+). In terms of biological role, specifically methylates guanosine-37 in various tRNAs. The chain is tRNA (guanine-N(1)-)-methyltransferase from Salmonella schwarzengrund (strain CVM19633).